Here is a 2764-residue protein sequence, read N- to C-terminus: Teneurin-2 (2764 aa).

In terms of domain architecture, Teneurin N-terminal spans 1 to 375 (MDVKDRRHRS…KPSKYCSWKC (375 aa)). At 1 to 379 (MDVKDRRHRS…YCSWKCAALS (379 aa)) the chain is on the cytoplasmic side. 2 positions are modified to phosphoserine: S90 and S124. A disordered region spans residues 111–271 (TGSDADSDTE…HHHSSANSLN (161 aa)). Over residues 141 to 155 (SSGLSSRENSALTLT) the composition is skewed to polar residues. T155 bears the Phosphothreonine mark. S157 carries the post-translational modification Phosphoserine. The segment covering 159–168 (NENKSDDDNG) has biased composition (basic and acidic residues). Over residues 174 to 188 (TSSSSLLPSAQLPSS) the composition is skewed to low complexity. A compositionally biased stretch (polar residues) spans 202 to 211 (DSNTSHQIMD). Residues 229–240 (SGPQQASSSGPP) show a composition bias toward low complexity. A helical transmembrane segment spans residues 380 to 400 (AIAAALLLAILLAYFIAMHLL). At 401–2764 (GLNWQLQPAD…FLRQNEMGKR (2364 aa)) the chain is on the extracellular side. N-linked (GlcNAc...) asparagine glycosylation is found at N443 and N482. 8 EGF-like domains span residues 575–603 (DCPR…ADCA), 598–634 (LGAD…AECD), 636–668 (PMNQ…EHCE), 669–701 (EVDC…NCEL), 702–735 (ARVQ…PDCS), 737–765 (VCSV…AACD), 768–796 (VCHP…EHCT), and 798–831 (DGCP…PGCN). Disulfide bonds link C576/C586, C580/C591, C593/C602, C611/C622, C624/C633, C640/C651, C645/C656, C658/C667, C672/C683, C677/C688, C690/C699, C710/C723, C725/C734, C738/C748, C742/C753, C755/C764, C769/C779, C773/C784, C786/C795, C800/C810, C804/C819, and C821/C830. N-linked (GlcNAc...) asparagine glycans are attached at residues N915, N938, and N1257. NHL repeat units follow at residues 1262 to 1306 (LELR…VKSL), 1332 to 1376 (ARCG…NGII), 1391 to 1442 (LSCD…IAGR), 1464 to 1491 (LESA…INRL), and 1520 to 1563 (CYSG…VSKN). Residues 1573 to 1592 (YEAASPGEQELYVFNADGIH) form a YD 1 repeat. A glycan (N-linked (GlcNAc...) asparagine) is linked at N1606. YD repeat units lie at residues 1609–1629 (YSAD…LKIR), 1672–1691 (YDGN…WTTF), and 1692–1714 (YDYD…TSLH). N-linked (GlcNAc...) asparagine glycosylation is found at N1702, N1739, N1763, N1797, and N1882. YD repeat units lie at residues 1885–1904 (YFFN…ERTD), 1926–1944 (YLDK…YIFE), 1945–1965 (YDSS…HSMS), 1972–1989 (YIRN…VIFD), 1990–2011 (YSDD…VFYK), 2012–2029 (YGKL…TAVT), 2032–2052 (YDET…FSCT), 2055–2075 (YRKV…EGMI), 2083–2103 (YHDN…TPLP), 2109–2126 (YDEI…GVIY), 2127–2153 (YDIN…IKEV), 2155–2168 (YEMF…MTVQ), 2169–2192 (YDSM…TKYT), 2195–2215 (YDGD…WRYS), 2216–2236 (YDLN…LMPL), 2238–2258 (YDLR…DDDG), 2270–2290 (YNSK…SVQY), and 2292–2312 (YDGV…LQYF). The N-linked (GlcNAc...) asparagine glycan is linked to N1983. N2187 is a glycosylation site (N-linked (GlcNAc...) asparagine). A glycan (N-linked (GlcNAc...) asparagine) is linked at N2327. The YD 23 repeat unit spans residues 2338-2379 (YDLQGHLFAMESSSGEEYYVASDNTGTPLAVYSINGLMIKQL). N-linked (GlcNAc...) asparagine glycosylation occurs at N2638.

This sequence belongs to the tenascin family. Teneurin subfamily. Homodimer; disulfide-linked. Heterodimer with either TENM1 or TENM3. May also form heterodimer with TENM4. Derives from the membrane form by proteolytic processing. Post-translationally, derives from the plasma membrane form by proteolytic cleavage and translocates to the nucleus. Homophilic binding of the C-terminal extracellular domain stimulates its proteolytic cleavage and release in the cytoplasmic. Is subjected to rapid degradation by the proteasome pathway. Expressed in the cortex, CA1, CA2, CA3, dentate gyrus and granular layer of the hippocampus. Expressed in the Purkinje cells and molecular layer of the cerebellum.

It localises to the cell membrane. The protein localises to the presynaptic cell membrane. It is found in the postsynaptic cell membrane. Its subcellular location is the endoplasmic reticulum. The protein resides in the golgi apparatus. It localises to the synapse. The protein localises to the cell projection. It is found in the dendritic spine. Its subcellular location is the filopodium. The protein resides in the growth cone. It localises to the nucleus. The protein localises to the PML body. Involved in neural development, regulating the establishment of proper connectivity within the nervous system. Acts as a ligand of the ADGRL1 and ADGRL3 receptors that are expressed at the surface of adjacent cells. Promotes the formation of filopodia and enlarged growth cone in neuronal cells. Mediates axon guidance and homophilic and heterophilic cell-cell adhesion. May function as a cellular signal transducer. Its function is as follows. Induces gene transcription inhibition. This Mus musculus (Mouse) protein is Teneurin-2 (Tenm2).